Consider the following 529-residue polypeptide: Protein PAT1 homolog 2 (529 aa).

Positions 153–183 (QILQQQQRWRRRRSPTARSVPAQKPWSREPA) are disordered.

The protein belongs to the PAT1 family. In terms of assembly, interacts with LSM1.

It is found in the cytoplasm. It localises to the nucleus. RNA-binding protein that acts as a translational repressor. The chain is Protein PAT1 homolog 2 (Patl2) from Mus musculus (Mouse).